We begin with the raw amino-acid sequence, 213 residues long: Holliday junction branch migration complex subunit RuvA (213 aa).

Residues 1 to 63 are domain I; sequence MISFLRGTVA…EDSMTLFGFA (63 aa). Positions 64 to 140 are domain II; sequence DDDEREVFEV…LVPHGTAPAA (77 aa). Residues 140–144 are flexible linker; that stretch reads AATTA. The segment at 145-213 is domain III; the sequence is AEASWKPQVV…RAGNRVGSRG (69 aa).

It belongs to the RuvA family. As to quaternary structure, homotetramer. Forms an RuvA(8)-RuvB(12)-Holliday junction (HJ) complex. HJ DNA is sandwiched between 2 RuvA tetramers; dsDNA enters through RuvA and exits via RuvB. An RuvB hexamer assembles on each DNA strand where it exits the tetramer. Each RuvB hexamer is contacted by two RuvA subunits (via domain III) on 2 adjacent RuvB subunits; this complex drives branch migration. In the full resolvosome a probable DNA-RuvA(4)-RuvB(12)-RuvC(2) complex forms which resolves the HJ.

It localises to the cytoplasm. Its function is as follows. The RuvA-RuvB-RuvC complex processes Holliday junction (HJ) DNA during genetic recombination and DNA repair, while the RuvA-RuvB complex plays an important role in the rescue of blocked DNA replication forks via replication fork reversal (RFR). RuvA specifically binds to HJ cruciform DNA, conferring on it an open structure. The RuvB hexamer acts as an ATP-dependent pump, pulling dsDNA into and through the RuvAB complex. HJ branch migration allows RuvC to scan DNA until it finds its consensus sequence, where it cleaves and resolves the cruciform DNA. The protein is Holliday junction branch migration complex subunit RuvA of Pseudarthrobacter chlorophenolicus (strain ATCC 700700 / DSM 12829 / CIP 107037 / JCM 12360 / KCTC 9906 / NCIMB 13794 / A6) (Arthrobacter chlorophenolicus).